The primary structure comprises 706 residues: MHGQPHQHLHTSPTAPFNMTIPYQPSTYYGCSNVTESYKPLGKIGEGTFGEVFRAEQITTKRHVALKKILLHSEKEGFPVTALREIRILKLLRHENVIPLVDLAVERGDQSKKERGCVYMVTPYMDHDLAGLLGNQSVQLSPAHIKCYMLQLLEGIGYLHAKKFLHRDIKAANILVNDQGILKLADFGLARGYDGPAPNSQTAGVNTENLTAMVVTRWYRPPELILGDRKYTTAIDMWGIGCVFGEFFTRKPIFPGASDVDQGSKIFQAVGVPTEDTMPGWSVLPGAQNSNIWGTDATNKLDKLFGRLSKDGLDFLKGLLLLDPTKRLTAIGGKNHAYFKTEPLPCQPHELPKWQSSHELDNHKRREQEKNESKVQPPPREKQPPVREPRDRDRSRDSRPPRERDSRDRRPPRGRYDSFERPERRPEGPRDGPRDRDRDEYPRELPPRDLPPRDLPPRDRDYPPRERDWDRRPPPRDRDYPPRERDYPPRDSRDRDYHPRDRDYPPRDSRDYPRDSRDSRDSRPISPSRERFHKRPQFDMYSDTDYDRERDEDDRRRRPLPRDSSRDMTRDVYVPSRGREPRELPKGPPPAPGDKVEDKGESHNKDDKPCDTENPRDSDKSRDLGPPPGPPLPADGPPPPPSSNPPRPSETYGGSRPPWRRDSRDRRESRDRDGRDRDGRDRRLSSSRYARDEFDEYGRKRPRIER.

In terms of domain architecture, Protein kinase spans 38 to 339; sequence YKPLGKIGEG…AIGGKNHAYF (302 aa). ATP contacts are provided by residues 44–52 and Lys-67; that span reads IGEGTFGEV. The active-site Proton acceptor is Asp-168. 3 stretches are compositionally biased toward basic and acidic residues: residues 360-523, 545-570, and 594-623; these read LDNH…RDSR, DYDR…DMTR, and DKVE…KSRD. The tract at residues 360–706 is disordered; it reads LDNHKRREQE…YGRKRPRIER (347 aa). The segment covering 625 to 648 has biased composition (pro residues); that stretch reads GPPPGPPLPADGPPPPPSSNPPRP. Positions 659–706 are enriched in basic and acidic residues; that stretch reads WRRDSRDRRESRDRDGRDRDGRDRRLSSSRYARDEFDEYGRKRPRIER.

It belongs to the protein kinase superfamily. CMGC Ser/Thr protein kinase family. CDC2/CDKX subfamily.

The protein resides in the nucleus. It catalyses the reaction L-seryl-[protein] + ATP = O-phospho-L-seryl-[protein] + ADP + H(+). The catalysed reaction is L-threonyl-[protein] + ATP = O-phospho-L-threonyl-[protein] + ADP + H(+). It carries out the reaction [DNA-directed RNA polymerase] + ATP = phospho-[DNA-directed RNA polymerase] + ADP + H(+). In terms of biological role, serine/threonine-protein kinase involved in transcription regulation. Phosphorylates the UBC2/RAD6 ubiquitin-conjugating enzyme (E2), leading to monoubiquitination of histone H2B and the silencing of telomeric-associated genes. Also required for histone H3 methylation. Necessary for the recovery from pheromone-induced growth arrest in the cell cycle G1 phase. This chain is Serine/threonine-protein kinase BUR1 (BUR1), found in Yarrowia lipolytica (strain CLIB 122 / E 150) (Yeast).